The following is a 222-amino-acid chain: uncharacterized protein (222 aa).

This sequence belongs to the PhoU family.

Its subcellular location is the cytoplasm. Not known; probably involved in phosphate transport and/or metabolism. This is an uncharacterized protein from Deinococcus radiodurans (strain ATCC 13939 / DSM 20539 / JCM 16871 / CCUG 27074 / LMG 4051 / NBRC 15346 / NCIMB 9279 / VKM B-1422 / R1).